Here is a 333-residue protein sequence, read N- to C-terminus: T-cell surface glycoprotein CD1b1 (333 aa).

A signal peptide spans 1 to 17; it reads MLLVALALLAFLFPAGD. The Extracellular segment spans residues 18–302; that stretch reads TQNALQWPTS…LYWGHSISIG (285 aa). N-linked (GlcNAc...) asparagine glycosylation is found at asparagine 38, asparagine 75, and asparagine 146. 3 cysteine pairs are disulfide-bonded: cysteine 120/cysteine 184, cysteine 149/cysteine 163, and cysteine 224/cysteine 279. The region spanning 197-295 is the Ig-like domain; that stretch reads PDIQKQVKPD…LEGQDIILYW (99 aa). The helical transmembrane segment at 303 to 323 threads the bilayer; that stretch reads WIILAVLVPCLIVLVLFVLWF. Topologically, residues 324–333 are cytoplasmic; the sequence is YRRWSYEDIL. The short motif at 329–332 is the Internalization signal element; that stretch reads YEDI.

In terms of assembly, heterodimer with B2M (beta-2-microglobulin). Interacts with saposin C.

Its subcellular location is the cell membrane. It is found in the endosome membrane. The protein resides in the lysosome membrane. Its function is as follows. Antigen-presenting protein that binds self and non-self lipid and glycolipid antigens and presents them to T-cell receptors on natural killer T-cells. The protein is T-cell surface glycoprotein CD1b1 (CD1B1) of Cavia porcellus (Guinea pig).